A 240-amino-acid chain; its full sequence is Uridylate kinase (240 aa).

Position 13–16 (13–16 (KLSG)) interacts with ATP. An involved in allosteric activation by GTP region spans residues 21-26 (GDDGFG). Gly55 is a binding site for UMP. The ATP site is built by Gly56 and Arg60. Residues Asp75 and 136–143 (IGNPYFST) each bind UMP. Residues Asn164, Tyr170, and Asp173 each contribute to the ATP site.

The protein belongs to the UMP kinase family. In terms of assembly, homohexamer.

Its subcellular location is the cytoplasm. The enzyme catalyses UMP + ATP = UDP + ADP. It functions in the pathway pyrimidine metabolism; CTP biosynthesis via de novo pathway; UDP from UMP (UMPK route): step 1/1. With respect to regulation, allosterically activated by GTP. Inhibited by UTP. In terms of biological role, catalyzes the reversible phosphorylation of UMP to UDP. This is Uridylate kinase from Staphylococcus saprophyticus subsp. saprophyticus (strain ATCC 15305 / DSM 20229 / NCIMB 8711 / NCTC 7292 / S-41).